Reading from the N-terminus, the 859-residue chain is DNA mismatch repair protein MutS (859 aa).

ATP is bound at residue 622 to 629 (GPNMGGKS).

It belongs to the DNA mismatch repair MutS family.

This protein is involved in the repair of mismatches in DNA. It is possible that it carries out the mismatch recognition step. This protein has a weak ATPase activity. This Syntrophomonas wolfei subsp. wolfei (strain DSM 2245B / Goettingen) protein is DNA mismatch repair protein MutS.